The following is a 311-amino-acid chain: p-hydroxybenzoic acid efflux pump subunit AaeA (311 aa).

A helical transmembrane segment spans residues 11 to 31 (VGITVLVVVLAVIAIFNVWAF).

It belongs to the membrane fusion protein (MFP) (TC 8.A.1) family.

It is found in the cell inner membrane. Forms an efflux pump with AaeB. The protein is p-hydroxybenzoic acid efflux pump subunit AaeA of Yersinia pseudotuberculosis serotype O:3 (strain YPIII).